Consider the following 377-residue polypeptide: RIB43A-like with coiled-coils protein 2 (377 aa).

Coiled coils occupy residues 217–250 (NKNQ…LRGD) and 282–308 (EEIR…RDMD).

The protein belongs to the RIB43A family. Microtubule inner protein component of sperm flagellar doublet microtubules. Expressed in trachea multiciliated cells.

Its subcellular location is the cytoplasm. The protein resides in the cytoskeleton. It localises to the cilium axoneme. It is found in the flagellum axoneme. Functionally, microtubule inner protein (MIP) part of the dynein-decorated doublet microtubules (DMTs) in cilia axoneme, which is required for motile cilia beating. The protein is RIB43A-like with coiled-coils protein 2 of Bos taurus (Bovine).